We begin with the raw amino-acid sequence, 464 residues long: Asparagine--tRNA ligase (464 aa).

This sequence belongs to the class-II aminoacyl-tRNA synthetase family. As to quaternary structure, homodimer.

It is found in the cytoplasm. The catalysed reaction is tRNA(Asn) + L-asparagine + ATP = L-asparaginyl-tRNA(Asn) + AMP + diphosphate + H(+). The polypeptide is Asparagine--tRNA ligase (Azobacteroides pseudotrichonymphae genomovar. CFP2).